Consider the following 135-residue polypeptide: MALYEHMFLARQDVAPQQVDELLSLYKGVIETHGGKVGRVENWGLRPLAYRIRKNRKAYYVLVNIDAPAAAIAEMERQMRINEDILRYMTIRVEKHEKEKSAMLSHLDRNAHAGQDEERSRSPRRQRENAIERVE.

The disordered stretch occupies residues 99-135 (EKSAMLSHLDRNAHAGQDEERSRSPRRQRENAIERVE).

Belongs to the bacterial ribosomal protein bS6 family.

Functionally, binds together with bS18 to 16S ribosomal RNA. The sequence is that of Small ribosomal subunit protein bS6 from Bartonella tribocorum (strain CIP 105476 / IBS 506).